The chain runs to 109 residues: Small ribosomal subunit protein eS25 (109 aa).

The disordered stretch occupies residues 1 to 36 (MGGASKKPISTVEKRMKKMAEEQQKKQQKRATTKTG). Over residues 12 to 25 (VEKRMKKMAEEQQK) the composition is skewed to basic and acidic residues.

The protein belongs to the eukaryotic ribosomal protein eS25 family.

This Sulfurisphaera tokodaii (strain DSM 16993 / JCM 10545 / NBRC 100140 / 7) (Sulfolobus tokodaii) protein is Small ribosomal subunit protein eS25 (rps25e).